A 294-amino-acid polypeptide reads, in one-letter code: Proteasome subunit beta (294 aa).

Positions 1–65 (MTADRPALRT…MESGDLAPHG (65 aa)) are cleaved as a propeptide — removed in mature form; by autocatalysis. The active-site Nucleophile is the Thr-66.

This sequence belongs to the peptidase T1B family. In terms of assembly, the 20S proteasome core is composed of 14 alpha and 14 beta subunits that assemble into four stacked heptameric rings, resulting in a barrel-shaped structure. The two inner rings, each composed of seven catalytic beta subunits, are sandwiched by two outer rings, each composed of seven alpha subunits. The catalytic chamber with the active sites is on the inside of the barrel. Has a gated structure, the ends of the cylinder being occluded by the N-termini of the alpha-subunits. Is capped by the proteasome-associated ATPase, ARC.

Its subcellular location is the cytoplasm. The catalysed reaction is Cleavage of peptide bonds with very broad specificity.. Its pathway is protein degradation; proteasomal Pup-dependent pathway. With respect to regulation, the formation of the proteasomal ATPase ARC-20S proteasome complex, likely via the docking of the C-termini of ARC into the intersubunit pockets in the alpha-rings, may trigger opening of the gate for substrate entry. Interconversion between the open-gate and close-gate conformations leads to a dynamic regulation of the 20S proteasome proteolysis activity. In terms of biological role, component of the proteasome core, a large protease complex with broad specificity involved in protein degradation. In Rhodococcus jostii (strain RHA1), this protein is Proteasome subunit beta.